The following is a 341-amino-acid chain: Anthranilate phosphoribosyltransferase (341 aa).

5-phospho-alpha-D-ribose 1-diphosphate is bound by residues Gly-85, 88–89 (GD), Thr-93, 95–98 (NIST), 113–121 (KHGNRSASG), and Ser-125. Gly-85 serves as a coordination point for anthranilate. Position 97 (Ser-97) interacts with Mg(2+). Asn-116 serves as a coordination point for anthranilate. Arg-171 contacts anthranilate. Mg(2+) is bound by residues Asp-230 and Glu-231.

The protein belongs to the anthranilate phosphoribosyltransferase family. Homodimer. Mg(2+) is required as a cofactor.

The enzyme catalyses N-(5-phospho-beta-D-ribosyl)anthranilate + diphosphate = 5-phospho-alpha-D-ribose 1-diphosphate + anthranilate. Its pathway is amino-acid biosynthesis; L-tryptophan biosynthesis; L-tryptophan from chorismate: step 2/5. Its function is as follows. Catalyzes the transfer of the phosphoribosyl group of 5-phosphorylribose-1-pyrophosphate (PRPP) to anthranilate to yield N-(5'-phosphoribosyl)-anthranilate (PRA). The chain is Anthranilate phosphoribosyltransferase from Prochlorococcus marinus (strain SARG / CCMP1375 / SS120).